Reading from the N-terminus, the 381-residue chain is Cytochrome P450 105C1 (381 aa).

Cys330 provides a ligand contact to heme.

It belongs to the cytochrome P450 family. Requires heme as cofactor.

Its subcellular location is the cytoplasm. The sequence is that of Cytochrome P450 105C1 (cyp105C1) from Streptomyces sp.